The sequence spans 710 residues: Pentatricopeptide repeat-containing protein At5g39680 (710 aa).

The residue at position 2 (Ser2) is an N-acetylserine. PPR repeat units follow at residues 35–64, 68–98, 99–133, 135–169, 170–200, 201–235, 236–270, 271–301, 302–336, 337–371, 372–402, 403–437, 438–473, and 474–504; these read NELL…NQSS, DAYQ…MPER, NVVS…GESR, NEFV…GLIS, HEFV…LPYC, DLSV…DFVW, NNLT…GFNA, EVEA…THAQ, NIFL…EVPP, NEYT…GYRN, HVMV…MTFR, DIVT…GEIP, NRIT…DVQP, and DIQH…APIE. The segment at 509-584 is type E motif; sequence AWRTLLNACY…EPGVSWIGIR (76 aa). Residues 585–615 are type E(+) motif; it reads NQTHVFLAEDNQHPEITLIYAKVKEVMSKIK. The tract at residues 616–710 is type DYW motif; sequence PLGYSPDVAG…DGQCSCCDYW (95 aa).

The protein belongs to the PPR family. PCMP-H subfamily.

The polypeptide is Pentatricopeptide repeat-containing protein At5g39680 (EMB2744) (Arabidopsis thaliana (Mouse-ear cress)).